Reading from the N-terminus, the 449-residue chain is Chromosomal replication initiator protein DnaA (449 aa).

The interval M1–V72 is domain I, interacts with DnaA modulators. Residues V72–N111 form a domain II region. A domain III, AAA+ region region spans residues M112–S328. 4 residues coordinate ATP: G156, G158, K159, and T160. The tract at residues S329–S449 is domain IV, binds dsDNA.

Belongs to the DnaA family. In terms of assembly, oligomerizes as a right-handed, spiral filament on DNA at oriC.

Its subcellular location is the cytoplasm. Its function is as follows. Plays an essential role in the initiation and regulation of chromosomal replication. ATP-DnaA binds to the origin of replication (oriC) to initiate formation of the DNA replication initiation complex once per cell cycle. Binds the DnaA box (a 9 base pair repeat at the origin) and separates the double-stranded (ds)DNA. Forms a right-handed helical filament on oriC DNA; dsDNA binds to the exterior of the filament while single-stranded (ss)DNA is stabiized in the filament's interior. The ATP-DnaA-oriC complex binds and stabilizes one strand of the AT-rich DNA unwinding element (DUE), permitting loading of DNA polymerase. After initiation quickly degrades to an ADP-DnaA complex that is not apt for DNA replication. Binds acidic phospholipids. This is Chromosomal replication initiator protein DnaA from Halalkalibacterium halodurans (strain ATCC BAA-125 / DSM 18197 / FERM 7344 / JCM 9153 / C-125) (Bacillus halodurans).